We begin with the raw amino-acid sequence, 339 residues long: Probable cytosolic iron-sulfur protein assembly protein CIAO1 (339 aa).

WD repeat units follow at residues H14–K53, G59–V98, G103–C142, S148–C187, G192–G231, F250–Q289, and A301–L339. The short motif at L176 to Q178 is the LYR motif; required for interaction with HSC20 element.

The protein belongs to the WD repeat CIA1 family. As to quaternary structure, component of the CIA complex. Interacts with CIAO2A and forms a complex with CIAO2B and MMS19; the interactions with CIAO2A and CIAO2B are mutually exclusive. Interacts with CHD1L, ERCC2, IREB2 and POLD1. Component of the MMXD complex, which includes CIAO1, ERCC2, CIAO2B, MMS19 and SLC25A5. Interacts with WT1. Interacts with CIAO3. Interacts (via LYR motif) with HSC20.

Its subcellular location is the cytoplasm. In terms of biological role, key component of the cytosolic iron-sulfur protein assembly (CIA) complex, a multiprotein complex that mediates the incorporation of iron-sulfur cluster into extramitochondrial Fe/S proteins. As a CIA complex component, interacts specifically with CIAO2A or CIAO2B and MMS19 to assist different branches of iron-sulfur protein assembly, depending of its interactors. The complex CIAO1:CIAO2B:MMS19 binds to and facilitates the assembly of most cytosolic-nuclear Fe/S proteins. CIAO1:CIAO2A specifically matures ACO1 and stabilizes IREB2. Seems to specifically modulate the transactivation activity of WT1. As part of the mitotic spindle-associated MMXD complex it may play a role in chromosome segregation. The sequence is that of Probable cytosolic iron-sulfur protein assembly protein CIAO1 from Mus musculus (Mouse).